The primary structure comprises 1045 residues: Extracellular serine protease (1045 aa).

An N-terminal signal peptide occupies residues 1-27 (MILNKKLKLAYCVFLGCYGLSLHSSLA). The Peptidase S8 domain maps to 49-396 (QWGLEAISAE…WGRVNLRDAI (348 aa)). Residues Asp-76, His-112, and Ser-341 each act as charge relay system in the active site. The propeptide occupies 646–1045 (SLASTENDKE…SVNAGLTWRF (400 aa)). The region spanning 769–1045 (IKADDNGAWA…SVNAGLTWRF (277 aa)) is the Autotransporter domain.

It belongs to the peptidase S8 family.

Its subcellular location is the secreted. The protein is Extracellular serine protease of Serratia marcescens.